Here is a 301-residue protein sequence, read N- to C-terminus: Nucleosome assembly protein 1;3 (301 aa).

Residues 15 to 69 adopt a coiled-coil conformation; it reads VETLKNKLQALAEQHVDVLESLAPVVRKRVDVLIEIQSQHDELEAKFLEEKAALE. The Nuclear export signal signature appears at 36–51; the sequence is LAPVVRKRVDVLIEIQ. The tract at residues 278–301 is disordered; the sequence is DEDYGASWVDDEEDDDDEYSDEEA.

Belongs to the nucleosome assembly protein (NAP) family.

It is found in the nucleus. It localises to the cytoplasm. May modulate chromatin structure by regulation of nucleosome assembly/disassembly. This is Nucleosome assembly protein 1;3 (NAP1;3) from Oryza sativa subsp. japonica (Rice).